A 202-amino-acid polypeptide reads, in one-letter code: Transcriptional regulator GfcR 2 (202 aa).

Belongs to the purine/pyrimidine phosphoribosyltransferase family. GfcR subfamily.

The polypeptide is Transcriptional regulator GfcR 2 (Methanosarcina barkeri (strain Fusaro / DSM 804)).